A 124-amino-acid chain; its full sequence is Protein CYSTEINE-RICH TRANSMEMBRANE MODULE 10 (124 aa).

The disordered stretch occupies residues 1–103 (MSYQDPQHPV…PKNKKDKKDS (103 aa)). Composition is skewed to pro residues over residues 27-40 (AGYP…PPQY) and 65-88 (GYPP…PPPH). Residues 101-118 (KDSGGFMEGCLAMLCCCV) form a helical membrane-spanning segment.

This sequence belongs to the CYSTM1 family. In terms of assembly, heterodimers. Interacts with CYSTM7 and WIH1/CYSTM13. In terms of tissue distribution, mostly expressed in stems and,at low levels, in stems, roots, flowers, siliques and leaves.

It is found in the cell membrane. It localises to the cytoplasm. Its function is as follows. Involved in resistance to abiotic stress. The protein is Protein CYSTEINE-RICH TRANSMEMBRANE MODULE 10 of Arabidopsis thaliana (Mouse-ear cress).